Here is a 468-residue protein sequence, read N- to C-terminus: BTB and MATH domain-containing protein 45 (468 aa).

The MATH domain maps to Val7–Val124. BTB domains follow at residues Ser148 to Asp215 and Ser304 to Leu368.

The polypeptide is BTB and MATH domain-containing protein 45 (bath-45) (Caenorhabditis elegans).